Consider the following 132-residue polypeptide: Small ribosomal subunit protein uS11 (132 aa).

The protein belongs to the universal ribosomal protein uS11 family. As to quaternary structure, part of the 30S ribosomal subunit.

Functionally, located on the platform of the 30S subunit. The polypeptide is Small ribosomal subunit protein uS11 (Caldivirga maquilingensis (strain ATCC 700844 / DSM 13496 / JCM 10307 / IC-167)).